A 2007-amino-acid polypeptide reads, in one-letter code: Structural maintenance of chromosomes flexible hinge domain-containing protein 1 (2007 aa).

An N-acetylalanine modification is found at A2. An ATPase activity domain region spans residues 111 to 702 (TKERIDFLPH…LSVTWPEGDE (592 aa)). The residue at position 833 (S833) is a Phosphoserine. K1350 is subject to N6-acetyllysine. A Glycyl lysine isopeptide (Lys-Gly) (interchain with G-Cter in SUMO2) cross-link involves residue K1375. T1500 carries the phosphothreonine modification. Residues 1721 to 1848 (GDILGKIAHL…DNLDAANHYR (128 aa)) enclose the SMC hinge domain. K1803 is modified (N6-succinyllysine). S1975 is subject to Phosphoserine. Residues 1984–2007 (PIPTKRMRRESTRQNRRPKGDVPN) form a disordered region.

The protein belongs to the SMC family. Highly divergent. In terms of assembly, homodimer; homodimerizes via its SMC hinge domain. Interacts with LRIF1. Sumoylated with SUMO1. In terms of tissue distribution, during embryogenesis, specifically expressed in immature olfactory sensory neurons.

Its subcellular location is the chromosome. It carries out the reaction ATP + H2O = ADP + phosphate + H(+). Non-canonical member of the structural maintenance of chromosomes (SMC) protein family that plays a key role in epigenetic silencing by regulating chromatin architecture. Promotes heterochromatin formation in both autosomes and chromosome X, probably by mediating the merge of chromatin compartments. Plays a key role in chromosome X inactivation in females by promoting the spreading of heterochromatin. Recruited to inactivated chromosome X by Xist RNA and acts by mediating the merge of chromatin compartments: promotes random chromatin interactions that span the boundaries of existing structures, leading to create a compartment-less architecture typical of inactivated chromosome X. Required to facilitate Xist RNA spreading. Also required for silencing of a subset of clustered autosomal loci in somatic cells, such as the DUX4 locus. Has ATPase activity; may participate in structural manipulation of chromatin in an ATP-dependent manner as part of its role in gene expression regulation. Also plays a role in DNA repair: localizes to sites of DNA double-strand breaks in response to DNA damage to promote the repair of DNA double-strand breaks. Acts by promoting non-homologous end joining (NHEJ) and inhibiting homologous recombination (HR) repair. Required during preimplantation development, probably acts by regulating chromatin architecture. In Mus musculus (Mouse), this protein is Structural maintenance of chromosomes flexible hinge domain-containing protein 1.